The primary structure comprises 730 residues: UvrABC system protein C (730 aa).

The 80-residue stretch at 16-95 (AAPGVYKFRD…IKEFDPRFNV (80 aa)) folds into the GIY-YIG domain. Positions 208-243 (DKLVKDLEKRMQQASEDLDFETAARLRDDIGALRKA) constitute a UVR domain. The disordered stretch occupies residues 678–730 (ARALPAAVGDDELDKESESSVTSADAPSAESGSGDEGSESRELSMPTTGPSAQ).

This sequence belongs to the UvrC family. In terms of assembly, interacts with UvrB in an incision complex.

The protein resides in the cytoplasm. Functionally, the UvrABC repair system catalyzes the recognition and processing of DNA lesions. UvrC both incises the 5' and 3' sides of the lesion. The N-terminal half is responsible for the 3' incision and the C-terminal half is responsible for the 5' incision. This chain is UvrABC system protein C, found in Rhodococcus erythropolis (strain PR4 / NBRC 100887).